The sequence spans 521 residues: MNNLADTVVVDPGFGGGDKQQQAGPAPQDASVVVPPPATKQSSALKKTSRYRSRSLSASSTDSFSSASYTGSSEDGDDVPPREKVQKNSKGSSDFCVRNIGAQHAFGRREIEIAEQEMPGIIALKKRAAEDKPLKDAKIVGCTHINAQTAVLIETLVELGASVRWAACNIYSTQNEVAAALAESGIPIFAWRGETEEDFWWCIDRCVNAENWQPNMILDDGGDATHLMLKKYPTMFKLVKGIVEESVTGVHRLYQLSKAGKLTVPAMNVNDSVTKTKFDNLYSCKESILDSLKRSTDVMFGGKQVVVCGYGDVGKGCAQALKGQGCIVYITEIDPICALQASMDGFRVVKLNEVIRNVDIVVTATGNKNVVVREHMDKMKSGCIVCNMGHSNTEIDVNGLRTPDLTWEKVRSQVDHIIWPEGKYIILLAEGRLVNLSCSSIPSFAVSITSATQALALIELFNAPPGRYKSDVYLLPKKMDEYVASLHLPTFDAHLTELSDEQAKYMGLNKAGPFKPNYYRY.

A disordered region spans residues 1–92 (MNNLADTVVV…EKVQKNSKGS (92 aa)). Low complexity predominate over residues 54–73 (RSLSASSTDSFSSASYTGSS). Residues Asp220 and Glu245 each contribute to the substrate site. 246 to 248 (SVT) is a binding site for NAD(+). Residues Lys275 and Asp279 each coordinate substrate. Residues 311–316 (GDVGKG), Glu332, 388–390 (MGH), Asn435, Lys515, 515–519 (KPNYY), and Tyr519 each bind NAD(+).

It belongs to the adenosylhomocysteinase family. In terms of assembly, interacts with Ahcy; the interaction may negatively regulate Ahcy catalytic activity. Requires NAD(+) as cofactor.

Might play a role in the regulation of methionine metabolism possibly by binding and inactivating Ahcy. The polypeptide is Adenosylhomocysteinase-like 1 (Drosophila melanogaster (Fruit fly)).